Consider the following 304-residue polypeptide: Oxygen-dependent coproporphyrinogen-III oxidase (304 aa).

Ser94 contributes to the substrate binding site. Residues His98 and His108 each contribute to the a divalent metal cation site. Catalysis depends on His108, which acts as the Proton donor. Substrate is bound at residue Asn110–Arg112. A divalent metal cation contacts are provided by His147 and His177. Positions Tyr242–Glu277 are important for dimerization. Gly260 to Arg262 contacts substrate.

It belongs to the aerobic coproporphyrinogen-III oxidase family. Homodimer. Requires a divalent metal cation as cofactor.

It localises to the cytoplasm. It catalyses the reaction coproporphyrinogen III + O2 + 2 H(+) = protoporphyrinogen IX + 2 CO2 + 2 H2O. It participates in porphyrin-containing compound metabolism; protoporphyrin-IX biosynthesis; protoporphyrinogen-IX from coproporphyrinogen-III (O2 route): step 1/1. Its function is as follows. Involved in the heme biosynthesis. Catalyzes the aerobic oxidative decarboxylation of propionate groups of rings A and B of coproporphyrinogen-III to yield the vinyl groups in protoporphyrinogen-IX. The chain is Oxygen-dependent coproporphyrinogen-III oxidase from Shewanella halifaxensis (strain HAW-EB4).